A 604-amino-acid polypeptide reads, in one-letter code: Elongation factor 4 (604 aa).

Residues serine 7–serine 189 enclose the tr-type G domain. Residues aspartate 19 to threonine 24 and asparagine 136 to aspartate 139 each bind GTP.

Belongs to the TRAFAC class translation factor GTPase superfamily. Classic translation factor GTPase family. LepA subfamily.

It localises to the cell inner membrane. It catalyses the reaction GTP + H2O = GDP + phosphate + H(+). Functionally, required for accurate and efficient protein synthesis under certain stress conditions. May act as a fidelity factor of the translation reaction, by catalyzing a one-codon backward translocation of tRNAs on improperly translocated ribosomes. Back-translocation proceeds from a post-translocation (POST) complex to a pre-translocation (PRE) complex, thus giving elongation factor G a second chance to translocate the tRNAs correctly. Binds to ribosomes in a GTP-dependent manner. The chain is Elongation factor 4 from Synechococcus elongatus (strain ATCC 33912 / PCC 7942 / FACHB-805) (Anacystis nidulans R2).